The sequence spans 574 residues: Pentatricopeptide repeat-containing protein At5g25630 (574 aa).

The segment covering 1-21 has biased composition (basic and acidic residues); it reads MEDVNQEKKKVPPMSEPERST. The disordered stretch occupies residues 1–25; it reads MEDVNQEKKKVPPMSEPERSTPIKT. 12 PPR repeats span residues 44–78, 79–113, 114–148, 149–183, 187–221, 222–258, 259–293, 294–328, 329–363, 364–394, 398–432, and 433–467; these read TVRSRTKLMNVLIERGRPHEAQTVFKTLAETGHRP, SLISYTTLLAAMTVQKQYGSISSIVSEVEQSGTKL, DSIFFNAVINAFSESGNMEDAVQALLKMKELGLNP, TTSTYNTLIKGYGIAGKPERSSELLDLMLEEGNVD, NIRTFNVLVQAWCKKKKVEEAWEVVKKMEECGVRP, DTVTYNTIATCYVQKGETVRAESEVVEKMVMKEKAKP, NGRTCGIVVGGYCREGRVRDGLRFVRRMKEMRVEA, NLVVFNSLINGFVEVMDRDGIDEVLTLMKECNVKA, DVITYSTVMNAWSSAGYMEKAAQVFKEMVKAGVKP, DAHAYSILAKGYVRAKEPKKAEELLETLIVE, NVVIFTTVISGWCSNGSMDDAMRVFNKMCKFGVSP, and NIKTFETLMWGYLEVKQPWKAEEVLQMMRGCGVKP.

The protein belongs to the PPR family. P subfamily.

In Arabidopsis thaliana (Mouse-ear cress), this protein is Pentatricopeptide repeat-containing protein At5g25630.